Reading from the N-terminus, the 117-residue chain is Large ribosomal subunit protein uL18 (117 aa).

The protein belongs to the universal ribosomal protein uL18 family. As to quaternary structure, part of the 50S ribosomal subunit; part of the 5S rRNA/L5/L18/L25 subcomplex. Contacts the 5S and 23S rRNAs.

In terms of biological role, this is one of the proteins that bind and probably mediate the attachment of the 5S RNA into the large ribosomal subunit, where it forms part of the central protuberance. This is Large ribosomal subunit protein uL18 from Photorhabdus laumondii subsp. laumondii (strain DSM 15139 / CIP 105565 / TT01) (Photorhabdus luminescens subsp. laumondii).